Reading from the N-terminus, the 369-residue chain is MKDGYKIIGFISSGTYGKVYKAVSSNSNDKRLFAIKKFKAESKQVSSNAQQTGVSQSAIREMMLCREIQHENIVSLVQVLLKDGTISMVFEYAEHDLLQIIHFHSRSRTRQIPPSILKSILWQIINGVAYLHENWIMHRDLKPANIMITATGKVKIGDLGLGRLIRDPILPFYSSDRVVVTIWYRAPELLLGAHDYTPAIDVWAIGCIYGEMLALSPLFKGDEIKMEDKKVVPFQSTQMLRIMELLGTPTEERWPGLKNYPEYYQLSSFEVRYWNNLLPQWYQTVKNRDPQGLDLLMKMLQYDPKSRITAKQALEHVFFTSDKLWTTSPFLNQPIHYPERRISEDDSEVSSKRVLSTSLRSESKRFKGN.

The Protein kinase domain maps to 5–319 (YKIIGFISSG…AKQALEHVFF (315 aa)). ATP is bound by residues 11–19 (ISSGTYGKV) and Lys-36. Asp-140 functions as the Proton acceptor in the catalytic mechanism.

Belongs to the protein kinase superfamily. CMGC Ser/Thr protein kinase family. CDC2/CDKX subfamily. As to quaternary structure, component of the Cdk8 module of the Mediator complex. The Cdk8 module is composed of srb8, srb9, srb10 and srb11. Interacts with med17 and med18.

The protein resides in the nucleus. The enzyme catalyses L-seryl-[protein] + ATP = O-phospho-L-seryl-[protein] + ADP + H(+). It catalyses the reaction L-threonyl-[protein] + ATP = O-phospho-L-threonyl-[protein] + ADP + H(+). It carries out the reaction [DNA-directed RNA polymerase] + ATP = phospho-[DNA-directed RNA polymerase] + ADP + H(+). In terms of biological role, catalytic component of the Cdk8 module/Srb8-11 module which is a regulatory module of the Mediator complex that regulates basal RNA polymerase II transcription. The Cdk8 module may sterically hinder the interaction between Mediator and RNA polymerase II leading to transcriptional repression of a subset of genes regulated by Mediator. The protein is Serine/threonine-protein kinase srb10 (srb10) of Schizosaccharomyces pombe (strain 972 / ATCC 24843) (Fission yeast).